The chain runs to 207 residues: Urease accessory protein UreG (207 aa).

16 to 23 (GPVGSGKT) is a binding site for GTP.

Belongs to the SIMIBI class G3E GTPase family. UreG subfamily. Homodimer. UreD, UreF and UreG form a complex that acts as a GTP-hydrolysis-dependent molecular chaperone, activating the urease apoprotein by helping to assemble the nickel containing metallocenter of UreC. The UreE protein probably delivers the nickel.

It is found in the cytoplasm. Its function is as follows. Facilitates the functional incorporation of the urease nickel metallocenter. This process requires GTP hydrolysis, probably effectuated by UreG. The polypeptide is Urease accessory protein UreG (Blochmanniella pennsylvanica (strain BPEN)).